Reading from the N-terminus, the 505-residue chain is MAAPPAIPRRGLFIGGGWREPTLGRHIPVINPATEDTIGDIPAATAEDVELAVAAGGPVLARRREPWARASGATRAKYLNAIAAKITGKIAYLALLETVDSGKPKDEAVADMDDVAACFEYYAALAEALDGKQHAPISLPMEEFKTYVLKEPIGVVGLITPWNYPLLMATWKVAPALAAGCTAVLKPSELASLTCLELGAICEEIGLPSGVLNIITGLGPDAGAPIASHPHVDKIAFTGSTATGKTIMTAAAQMVKPVSLELGGKSPLVTFDDVADIDKAVEWPMLGCFFNGGQVCSATSRLLLHEKIAEPFLDRLVEWAKNIKISDPLEEGCRLGSVISKGQYEQIKKFISTARSEGATILHGGDRPKHLGKGFFIEPTINTGVSTSMQIWREEVFGPVICVKVFKTESEAVELANDTHYGLAGGVISDDLERCERIAKVIHSGIVWKNCSQPTLVQAPWGGNKRSGFGRELGEWGLENYLSVKQVTRYCKDELYGWYQRPSKL.

NAD(+) is bound at residue 239 to 244 (GSTATG). The active-site Proton acceptor is E261. C296 functions as the Nucleophile in the catalytic mechanism. A Microbody targeting signal motif is present at residues 503 to 505 (SKL).

Belongs to the aldehyde dehydrogenase family. As to quaternary structure, homodimer.

It is found in the peroxisome. It catalyses the reaction betaine aldehyde + NAD(+) + H2O = glycine betaine + NADH + 2 H(+). Its pathway is amine and polyamine biosynthesis; betaine biosynthesis via choline pathway; betaine from betaine aldehyde: step 1/1. This is Betaine aldehyde dehydrogenase from Hordeum vulgare (Barley).